A 369-amino-acid polypeptide reads, in one-letter code: O-methyltransferase 12 (369 aa).

S-adenosyl-L-methionine-binding positions include G181, D204, 229-231 (GDF), D230, F231, and K244. Residue H248 is the Proton acceptor of the active site.

Belongs to the class I-like SAM-binding methyltransferase superfamily. Cation-independent O-methyltransferase family. COMT subfamily.

It catalyses the reaction resorcinol + S-adenosyl-L-methionine = 3-methoxyphenol + S-adenosyl-L-homocysteine + H(+). Its function is as follows. S-adenosyl-L-methionine dependent O-methyltransferase that may be involved in modifying resorcinol ring to synthesize a variant of 4-methyl-5-pentylbenzene-1,3-diol. This Dictyostelium discoideum (Social amoeba) protein is O-methyltransferase 12 (omt12).